The sequence spans 141 residues: Nucleoside diphosphate kinase (141 aa).

Lysine 11, phenylalanine 59, arginine 87, threonine 93, arginine 104, and asparagine 114 together coordinate ATP. Catalysis depends on histidine 117, which acts as the Pros-phosphohistidine intermediate.

This sequence belongs to the NDK family. Homotetramer. Mg(2+) is required as a cofactor.

The protein localises to the cytoplasm. It carries out the reaction a 2'-deoxyribonucleoside 5'-diphosphate + ATP = a 2'-deoxyribonucleoside 5'-triphosphate + ADP. The catalysed reaction is a ribonucleoside 5'-diphosphate + ATP = a ribonucleoside 5'-triphosphate + ADP. In terms of biological role, major role in the synthesis of nucleoside triphosphates other than ATP. The ATP gamma phosphate is transferred to the NDP beta phosphate via a ping-pong mechanism, using a phosphorylated active-site intermediate. The sequence is that of Nucleoside diphosphate kinase from Burkholderia cenocepacia (strain HI2424).